The primary structure comprises 295 residues: tRNA pseudouridine synthase A (295 aa).

Asp67 (nucleophile) is an active-site residue. Residue Tyr125 participates in substrate binding.

The protein belongs to the tRNA pseudouridine synthase TruA family. As to quaternary structure, homodimer.

The catalysed reaction is uridine(38/39/40) in tRNA = pseudouridine(38/39/40) in tRNA. Its function is as follows. Formation of pseudouridine at positions 38, 39 and 40 in the anticodon stem and loop of transfer RNAs. The polypeptide is tRNA pseudouridine synthase A (Prochlorococcus marinus (strain MIT 9303)).